Reading from the N-terminus, the 430-residue chain is Cell wall protein ECM33 (430 aa).

The first 19 residues, Met-1–Ala-19, serve as a signal peptide directing secretion. N-linked (GlcNAc...) asparagine glycans are attached at residues Asn-22, Asn-57, Asn-83, Asn-197, Asn-210, Asn-228, Asn-235, Asn-242, Asn-268, Asn-280, Asn-305, and Asn-329. Ser-340 is modified (phosphoserine). Over residues Leu-362–Ser-402 the composition is skewed to low complexity. The interval Leu-362–Glu-411 is disordered. A lipid anchor (GPI-anchor amidated glycine) is attached at Gly-407. A propeptide spans Ala-408–Leu-430 (removed in mature form).

This sequence belongs to the SPS2 family. Post-translationally, the GPI-anchor is attached to the protein in the endoplasmic reticulum and serves to target the protein to the cell surface. There, the glucosamine-inositol phospholipid moiety is cleaved off and the GPI-modified mannoprotein is covalently attached via its lipidless GPI glycan remnant to the 1,6-beta-glucan of the outer cell wall layer.

Its subcellular location is the cell membrane. It is found in the secreted. The protein resides in the cell wall. Its function is as follows. Required for proper cell wall integrity and for the correct assembly of the mannoprotein outer layer of the cell wall. Important for apical bud growth. This chain is Cell wall protein ECM33 (ECM33), found in Saccharomyces cerevisiae (strain JAY291) (Baker's yeast).